The primary structure comprises 310 residues: Ornithine carbamoyltransferase (310 aa).

Carbamoyl phosphate is bound by residues 58-61 (STRT), glutamine 85, arginine 109, and 136-139 (HPCQ). Residues asparagine 167, aspartate 227, and 231 to 232 (SM) each bind L-ornithine. Residues 266 to 267 (CL) and arginine 294 each bind carbamoyl phosphate.

It belongs to the aspartate/ornithine carbamoyltransferase superfamily. OTCase family.

The protein resides in the cytoplasm. The enzyme catalyses carbamoyl phosphate + L-ornithine = L-citrulline + phosphate + H(+). It functions in the pathway amino-acid biosynthesis; L-arginine biosynthesis; L-arginine from L-ornithine and carbamoyl phosphate: step 1/3. Reversibly catalyzes the transfer of the carbamoyl group from carbamoyl phosphate (CP) to the N(epsilon) atom of ornithine (ORN) to produce L-citrulline. This Rhodopseudomonas palustris (strain ATCC BAA-98 / CGA009) protein is Ornithine carbamoyltransferase.